Consider the following 131-residue polypeptide: MFARRAISIFAFMLVALSIFAAATPLDARTNPTVTVTVTAPGSTATIPAGQCNVSNQQCCNSVQSASSTPVSVILGLLGIVLQDLNVLVGLTCSPITVIGGGNGGCNANPVCCQNNSFGSLISIGCIPISL.

The N-terminal stretch at 1 to 23 is a signal peptide; that stretch reads MFARRAISIFAFMLVALSIFAAA. 4 disulfides stabilise this stretch: Cys52–Cys112, Cys59–Cys106, Cys60–Cys93, and Cys113–Cys126. Asn53 is a glycosylation site (N-linked (GlcNAc...) asparagine). An N-linked (GlcNAc...) asparagine glycan is attached at Asn115.

Belongs to the fungal hydrophobin family. As to quaternary structure, self-assembles to form functional amyloid fibrils called rodlets. Self-assembly into fibrillar rodlets occurs spontaneously at hydrophobic:hydrophilic interfaces and the rodlets further associate laterally to form amphipathic monolayers.

It is found in the secreted. The protein resides in the cell wall. Functionally, aerial growth, conidiation, and dispersal of filamentous fungi in the environment rely upon a capability of their secreting small amphipathic proteins called hydrophobins (HPBs) with low sequence identity. Class I can self-assemble into an outermost layer of rodlet bundles on aerial cell surfaces, conferring cellular hydrophobicity that supports fungal growth, development and dispersal; whereas Class II form highly ordered films at water-air interfaces through intermolecular interactions but contribute nothing to the rodlet structure. This is Class I hydrophobin 9 from Flammulina velutipes (Agaricus velutipes).